A 538-amino-acid polypeptide reads, in one-letter code: Sterile alpha motif domain-containing protein 1 (538 aa).

Pro residues predominate over residues 1–11 (MAGPPALPPPE). Disordered stretches follow at residues 1–30 (MAGP…ASPH) and 92–247 (SYRN…GAAR). A compositionally biased stretch (low complexity) spans 12–29 (TAAAATTAAAASSSAASP). Positions 23 to 99 (SSSAASPHYQ…SISYRNAARV (77 aa)) constitute an SAMD1-like winged helix (WH) domain. Threonine 107 bears the Phosphothreonine mark. A compositionally biased stretch (low complexity) spans 115-125 (PRGAPAAAAAA). Pro residues predominate over residues 126 to 139 (APPPTPAPPPPPAP). Over residues 140 to 158 (VAAAAPARAPRAAAAAATA) the composition is skewed to low complexity. Residue serine 161 is modified to Phosphoserine. The segment covering 168–177 (GPRAQRAAPL) has biased composition (low complexity). Positions 178 to 236 (AAPPPAPAAPPAVAPPAGPRRAPPPAVAAREPPLPPPPQPPAPPQQQQPPPPQPQPPPE) are enriched in pro residues. The segment covering 237–247 (GGAVRAGGAAR) has biased composition (low complexity). Position 261 is a phosphoserine (serine 261). Basic and acidic residues predominate over residues 282–291 (AARGRLERTR). The disordered stretch occupies residues 282–458 (AARGRLERTR…PPGRKEKPSD (177 aa)). The segment covering 328–351 (KEEEEDDDEDEDEEDDVSEGSEVP) has biased composition (acidic residues). Positions 425–436 (SPSPVPLPPGKP) are enriched in pro residues. Positions 462–530 (WTVMDVVEYF…KVLQQGHFED (69 aa)) constitute an SAM domain.

In terms of assembly, homopolymerize into a closed pentameric ring. Interacts (via SAM domain) with L3MBTL3 (via SAM domain); the interaction mediates L3MBTL3 binding to chromatin. Interacts (via WH domain) with KDM1A; the interaction modulates KDM1A function. In terms of tissue distribution, expressed in atherosclerotic lesions, not in normal intima. Expressed in foam cells.

It is found in the nucleus. The protein resides in the chromosome. Its subcellular location is the secreted. Its function is as follows. Unmethylated CpG islands (CGIs)-binding protein which localizes to H3K4me3-decorated CGIs, where it acts as a transcriptional repressor. Tethers L3MBTL3 to chromatin and interacts with the KDM1A histone demethylase complex to modulate H3K4me2 and H3K4me3 levels at CGIs. Plays a role in atherogenesis by binding with LDL on cell surface and promoting LDL oxidation which leads to the formation of foam cell. In Homo sapiens (Human), this protein is Sterile alpha motif domain-containing protein 1.